The following is a 138-amino-acid chain: Large ribosomal subunit protein uL16 (138 aa).

A compositionally biased stretch (basic residues) spans 1–15; the sequence is MLSPRKVKYRKKQRG. A disordered region spans residues 1–21; the sequence is MLSPRKVKYRKKQRGRLSGEA.

The protein belongs to the universal ribosomal protein uL16 family. As to quaternary structure, part of the 50S ribosomal subunit.

Binds 23S rRNA and is also seen to make contacts with the A and possibly P site tRNAs. The sequence is that of Large ribosomal subunit protein uL16 from Borrelia recurrentis (strain A1).